The following is a 412-amino-acid chain: Keratin, type I microfibrillar 48 kDa, component 8C-1 (412 aa).

Ser1 carries the post-translational modification N-acetylserine. The segment at 1-55 is head; the sequence is SFNFCLPNLSFRSSCSSRPCVPSSCCGTTLPGACNIPANVGSCNWFCEGSFDGNE. Residues 55–366 form the IF rod domain; sequence EKETMQFLND…GLLDSEDCKL (312 aa). A coil 1A region spans residues 56-90; the sequence is KETMQFLNDRLASYLEKVRQLERENAELESRILER. The tract at residues 91-101 is linker 1; that stretch reads SQQQEPLVCPN. The segment at 102-202 is coil 1B; it reads YQSYFRTIEE…HEEEVNTLRS (101 aa). The interval 203 to 218 is linker 12; sequence QLGDRLNVEVDAAPTV. The segment at 219–362 is coil 2; the sequence is DLNRVLNETR…NTYRGLLDSE (144 aa). The tract at residues 363–412 is tail; sequence DCKLPCNPCATTNACGKTITPCISSPCAPAAPCTPCVPRSRCGPCNSYVR.

This sequence belongs to the intermediate filament family.

Its function is as follows. Wool microfibrillar keratin. In Ovis aries (Sheep), this protein is Keratin, type I microfibrillar 48 kDa, component 8C-1.